The chain runs to 817 residues: Dual specificity tyrosine-phosphorylation-regulated kinase mbk-2 (817 aa).

4 disordered regions span residues 1–46 (MAAL…HECP), 70–148 (PTSF…GPLG), 186–206 (GSYEFPSGQAQQQRRLGGSQQ), and 301–396 (LPNV…FRPE). Residues 7–25 (FTRNSRSYGQQPIDVTQQG) are compositionally biased toward polar residues. Composition is skewed to low complexity over residues 70 to 81 (PTSFSGASSSSS) and 97 to 111 (NLLGSSQNSASSNSL). 2 stretches are compositionally biased toward polar residues: residues 122–143 (SGNTLTRSYHQPSSTNSSTNNL) and 193–206 (GQAQQQRRLGGSQQ). Low complexity predominate over residues 303–318 (NVGTSSSNGSSNSSSG). Over residues 327-351 (LMTQSIGGPNKHLSASHSTLNTAST) the composition is skewed to polar residues. At S362 the chain carries Phosphoserine; by cdk-1. Low complexity predominate over residues 364–392 (SNESLSRSHTSSSGGSQGGHNSNSGSNSG). The region spanning 461 to 774 (YEVLKVIGKG…PAQALKHKWL (314 aa)) is the Protein kinase domain. Residues 467-475 (IGKGSFGQV) and K490 contribute to the ATP site. D587 acts as the Proton acceptor in catalysis. Residue Y621 is modified to Phosphotyrosine; by autocatalysis.

It belongs to the protein kinase superfamily. CMGC Ser/Thr protein kinase family. MNB/DYRK subfamily. As to quaternary structure, part of a complex, consisting of pseudophosphatases egg-3, egg-4, egg-5 and kinase mbk-2; this complex is required for the oocyte-to-zygote transition. Interacts (via Tyr-619 and Tyr-621) with egg-4 (via tyrosine-protein phosphatase domain) and egg-5 (via tyrosine-protein phosphatase domain); mbk-2 tyrosine phosphorylation enhances the interaction. The interaction inhibits mbk-2 kinase activity and is required for mbk-2 oocyte cortex localization. Interacts (via N-terminus) with egg-3 (via tyrosine-protein phosphatase domain); the interaction does not affect mbk-2 kinase activity, is enhanced by mbk-2 tyrosine phosphorylation status and requires prior binding of mbk-2 to egg-4 and egg-5. It depends on Mg(2+) as a cofactor. Post-translationally, autophosphorylated. In terms of tissue distribution, in L1 larvae, expressed widely in the nervous system, including head neurons and the ventral nerve cord. In adult animals, continues to be expressed in the nervous system and is also expressed in body wall muscle.

The protein localises to the cytoplasm. The protein resides in the cell cortex. It carries out the reaction L-seryl-[protein] + ATP = O-phospho-L-seryl-[protein] + ADP + H(+). The catalysed reaction is L-threonyl-[protein] + ATP = O-phospho-L-threonyl-[protein] + ADP + H(+). The enzyme catalyses L-tyrosyl-[protein] + ATP = O-phospho-L-tyrosyl-[protein] + ADP + H(+). Activated during oocyte maturation by phosphorylation on Ser-362 by cdk-1. The pseudotyrosine phosphatases egg-4 and egg-5 sequester activated mbk-2 until the meiotic divisions and inhibit mbk-2 kinase activity directly, using a mixed-inhibition mechanism that does not involve tyrosine dephosphorylation. Required for oocyte-to-zygote transition in which it phosphorylates oocyte proteins, including mei-1, oma-1, oma-2, mex-5, and mex-6, modifying their activity and/or stability following meiosis. Through phosphorylation of P granule components including meg-1, promotes the disassembly of zygotic P granules in the anterior cytoplasm during zygote polarization, and thus plays a role in P granule distribution and segregation in early stage embryos following meiosis. Functions in both spindle positioning and in the posterior localization of cytoplasmic determinants, including pie-1, pos-1, and pgl-1, in early embryos. Involved in the asymmetric distribution of plk-1 at the 2-cell embryonic stage. The protein is Dual specificity tyrosine-phosphorylation-regulated kinase mbk-2 of Caenorhabditis elegans.